The sequence spans 513 residues: Probable hydrolase YhcX (513 aa).

Residues 14-212 form the N-acetyltransferase domain; the sequence is MVIRNIEEKD…YATLMEWNNV (199 aa). The region spanning 229-484 is the CN hydrolase domain; the sequence is VRICVIQYEM…EMVVIGDVDL (256 aa). Glu270 serves as the catalytic Proton acceptor. The active-site Proton donor is the Lys345. Residue Cys379 is the Nucleophile of the active site.

The protein belongs to the carbon-nitrogen hydrolase superfamily. NIT1/NIT2 family.

The chain is Probable hydrolase YhcX (yhcX) from Bacillus subtilis (strain 168).